We begin with the raw amino-acid sequence, 669 residues long: DNA ligase (669 aa).

NAD(+) contacts are provided by residues 34-38, 83-84, and E114; these read DAEYD and SL. K116 functions as the N6-AMP-lysine intermediate in the catalytic mechanism. 4 residues coordinate NAD(+): R137, E171, K287, and K311. C405, C408, C423, and C428 together coordinate Zn(2+). The BRCT domain maps to 591 to 669; the sequence is NVESYFAGKT…EERFLQELNK (79 aa).

This sequence belongs to the NAD-dependent DNA ligase family. LigA subfamily. Mg(2+) is required as a cofactor. Mn(2+) serves as cofactor.

The catalysed reaction is NAD(+) + (deoxyribonucleotide)n-3'-hydroxyl + 5'-phospho-(deoxyribonucleotide)m = (deoxyribonucleotide)n+m + AMP + beta-nicotinamide D-nucleotide.. In terms of biological role, DNA ligase that catalyzes the formation of phosphodiester linkages between 5'-phosphoryl and 3'-hydroxyl groups in double-stranded DNA using NAD as a coenzyme and as the energy source for the reaction. It is essential for DNA replication and repair of damaged DNA. In Bacillus cereus (strain AH187), this protein is DNA ligase.